A 273-amino-acid chain; its full sequence is Large ribosomal subunit protein uL2 (273 aa).

The disordered stretch occupies residues 228-273 (VDHPHGGGEGKTSGGRHPVTPWGFPTKGKKTRKNKRTSKFIVKKRK). A compositionally biased stretch (basic residues) spans 254–273 (KGKKTRKNKRTSKFIVKKRK).

It belongs to the universal ribosomal protein uL2 family. As to quaternary structure, part of the 50S ribosomal subunit. Forms a bridge to the 30S subunit in the 70S ribosome.

Its function is as follows. One of the primary rRNA binding proteins. Required for association of the 30S and 50S subunits to form the 70S ribosome, for tRNA binding and peptide bond formation. It has been suggested to have peptidyltransferase activity; this is somewhat controversial. Makes several contacts with the 16S rRNA in the 70S ribosome. In Rickettsia peacockii (strain Rustic), this protein is Large ribosomal subunit protein uL2.